The sequence spans 391 residues: Eukaryotic initiation factor 4A-3 (391 aa).

The Q motif signature appears at 18–46 (ASFAEMGIKDDLLRGVYQYGFEKPSAIQQ). The Helicase ATP-binding domain occupies 49–219 (VLPIISGRDV…SKFMTDPVRI (171 aa)). 62–69 (AQSGTGKT) contributes to the ATP binding site. Residues 167–170 (DESD) carry the DEAD box motif. The 162-residue stretch at 230-391 (GIKQFFVAVE…EMPMNVADLI (162 aa)) folds into the Helicase C-terminal domain.

It belongs to the DEAD box helicase family. eIF4A subfamily. In terms of assembly, eIF4F is a multi-subunit complex, the composition of which varies with external and internal environmental conditions. It is composed of at least EIF4A, EIF4E and EIF4G.

The enzyme catalyses ATP + H2O = ADP + phosphate + H(+). ATP-dependent RNA helicase which is a subunit of the eIF4F complex involved in cap recognition and is required for mRNA binding to ribosome. In the current model of translation initiation, eIF4A unwinds RNA secondary structures in the 5'-UTR of mRNAs which is necessary to allow efficient binding of the small ribosomal subunit, and subsequent scanning for the initiator codon. In Nicotiana plumbaginifolia (Leadwort-leaved tobacco), this protein is Eukaryotic initiation factor 4A-3.